The chain runs to 213 residues: Orotate phosphoribosyltransferase (213 aa).

Residue Lys-26 coordinates 5-phospho-alpha-D-ribose 1-diphosphate. Orotate is bound at residue 34–35; sequence FF. 5-phospho-alpha-D-ribose 1-diphosphate contacts are provided by residues 72-73, Arg-99, Lys-100, Lys-103, His-105, and 124-132; these read YK and DDVITAGTA. Residues Thr-128 and Arg-156 each coordinate orotate.

This sequence belongs to the purine/pyrimidine phosphoribosyltransferase family. PyrE subfamily. As to quaternary structure, homodimer. It depends on Mg(2+) as a cofactor.

The enzyme catalyses orotidine 5'-phosphate + diphosphate = orotate + 5-phospho-alpha-D-ribose 1-diphosphate. It functions in the pathway pyrimidine metabolism; UMP biosynthesis via de novo pathway; UMP from orotate: step 1/2. In terms of biological role, catalyzes the transfer of a ribosyl phosphate group from 5-phosphoribose 1-diphosphate to orotate, leading to the formation of orotidine monophosphate (OMP). In Erwinia tasmaniensis (strain DSM 17950 / CFBP 7177 / CIP 109463 / NCPPB 4357 / Et1/99), this protein is Orotate phosphoribosyltransferase.